The following is a 131-amino-acid chain: Cystatin-like cysteine protease inhibitor EPIC3 (131 aa).

The N-terminal stretch at 1-22 is a signal peptide; that stretch reads MAFTRSIALFAGLALAASSAQG. A glycan (N-linked (GlcNAc...) asparagine) is linked at asparagine 33. The Secondary area of contact motif lies at 71-75; the sequence is QTVAG.

This sequence belongs to the cystatin family.

It is found in the secreted. In terms of biological role, secreted effector that interacts with and inhibits host apoplastic pathogenesis-related papain-like cysteine proteases. Inhibition of host proteases by a pathogen extracellular protease inhibitor forms a specific type of defense-counterdefense mechanism between plants and microbial pathogens. This chain is Cystatin-like cysteine protease inhibitor EPIC3, found in Phytophthora infestans (strain T30-4) (Potato late blight agent).